A 321-amino-acid chain; its full sequence is Homoserine O-acetyltransferase (321 aa).

The Acyl-thioester intermediate role is filled by Cys142. 2 residues coordinate substrate: Lys163 and Ser192. The Proton acceptor role is filled by His235. The active site involves Glu237. Arg249 contacts substrate.

The protein belongs to the MetA family.

The protein resides in the cytoplasm. It carries out the reaction L-homoserine + acetyl-CoA = O-acetyl-L-homoserine + CoA. The protein operates within amino-acid biosynthesis; L-methionine biosynthesis via de novo pathway; O-acetyl-L-homoserine from L-homoserine: step 1/1. Transfers an acetyl group from acetyl-CoA to L-homoserine, forming acetyl-L-homoserine. The polypeptide is Homoserine O-acetyltransferase (Lactococcus lactis subsp. lactis (strain IL1403) (Streptococcus lactis)).